A 183-amino-acid polypeptide reads, in one-letter code: Large ribosomal subunit protein uL6 (183 aa).

It belongs to the universal ribosomal protein uL6 family. As to quaternary structure, part of the 50S ribosomal subunit.

In terms of biological role, this protein binds to the 23S rRNA, and is important in its secondary structure. It is located near the subunit interface in the base of the L7/L12 stalk, and near the tRNA binding site of the peptidyltransferase center. This Methanococcus aeolicus (strain ATCC BAA-1280 / DSM 17508 / OCM 812 / Nankai-3) protein is Large ribosomal subunit protein uL6.